Here is a 397-residue protein sequence, read N- to C-terminus: Teichoic acid D-alanine hydrolase (397 aa).

Residues 1–27 (MKFNKEKLVIHACVLLFIIISIGLVFH) form the signal peptide.

The protein resides in the cell membrane. The catalysed reaction is [(4-D-Ala)-(2-GlcNAc)-Rib-ol-P]n-[Gro-P]m-beta-D-ManNAc-(1-&gt;4)-alpha-D-GlcNAc-P-peptidoglycan + n H2O = [(2-GlcNAc)-Rib-ol-P]n-[Gro-P]m-beta-D-ManNAc-(1-&gt;4)-alpha-D-GlcNAc-P-peptidoglycan + n D-alanine.. Its function is as follows. Catalyzes the liberation of D-alanyl moieties present on wall teichoic acid (WTA) and lipoteichoic acid (LTA). Affects the methicillin resistance level and autolysis in the presence of Triton X-100 as well as the cell wall structure. The sequence is that of Teichoic acid D-alanine hydrolase (fmtA) from Staphylococcus aureus (strain MRSA252).